The sequence spans 60 residues: Short neurotoxin 1 (60 aa).

Disulfide bonds link C3-C22, C17-C39, C41-C52, and C53-C58.

This sequence belongs to the three-finger toxin family. Short-chain subfamily. Type I alpha-neurotoxin sub-subfamily. Expressed by the venom gland.

The protein resides in the secreted. In terms of biological role, binds to muscle nicotinic acetylcholine receptor (nAChR) and inhibit acetylcholine from binding to the receptor, thereby impairing neuromuscular transmission. This is Short neurotoxin 1 from Hydrophis schistosus (Beaked sea snake).